We begin with the raw amino-acid sequence, 209 residues long: ATP-dependent Clp protease proteolytic subunit 2 (209 aa).

Serine 107 serves as the catalytic Nucleophile. Histidine 132 is a catalytic residue.

It belongs to the peptidase S14 family. Fourteen ClpP subunits assemble into 2 heptameric rings which stack back to back to give a disk-like structure with a central cavity, resembling the structure of eukaryotic proteasomes.

The protein localises to the cytoplasm. The catalysed reaction is Hydrolysis of proteins to small peptides in the presence of ATP and magnesium. alpha-casein is the usual test substrate. In the absence of ATP, only oligopeptides shorter than five residues are hydrolyzed (such as succinyl-Leu-Tyr-|-NHMec, and Leu-Tyr-Leu-|-Tyr-Trp, in which cleavage of the -Tyr-|-Leu- and -Tyr-|-Trp bonds also occurs).. Its function is as follows. Cleaves peptides in various proteins in a process that requires ATP hydrolysis. Has a chymotrypsin-like activity. Plays a major role in the degradation of misfolded proteins. The chain is ATP-dependent Clp protease proteolytic subunit 2 from Corynebacterium jeikeium (strain K411).